Here is a 643-residue protein sequence, read N- to C-terminus: Protein ecdysoneless homolog (643 aa).

2 disordered regions span residues 428–458 and 501–600; these read EFYN…NNFD and IESM…FTPV. Residues 446-456 show a composition bias toward polar residues; that stretch reads AGSSSDANMNN. The segment covering 528 to 543 has biased composition (acidic residues); sequence MDFDDVEDDSEGEESN. Polar residues predominate over residues 564–580; it reads NSTLEKSFENVNQQHSS. A compositionally biased stretch (basic and acidic residues) spans 581–592; sequence KQNEESSKTRDE.

Belongs to the ECD family.

This chain is Protein ecdysoneless homolog, found in Arabidopsis thaliana (Mouse-ear cress).